Consider the following 142-residue polypeptide: 3-hydroxyacyl-[acyl-carrier-protein] dehydratase FabZ (142 aa).

His-49 is an active-site residue.

Belongs to the thioester dehydratase family. FabZ subfamily.

The protein localises to the cytoplasm. The catalysed reaction is a (3R)-hydroxyacyl-[ACP] = a (2E)-enoyl-[ACP] + H2O. Involved in unsaturated fatty acids biosynthesis. Catalyzes the dehydration of short chain beta-hydroxyacyl-ACPs and long chain saturated and unsaturated beta-hydroxyacyl-ACPs. The polypeptide is 3-hydroxyacyl-[acyl-carrier-protein] dehydratase FabZ (Clostridium novyi (strain NT)).